Consider the following 483-residue polypeptide: PAT complex subunit CCDC47 (483 aa).

Residues 1 to 20 form the signal peptide; the sequence is MKAFHTFCVVLLVFGSVSEA. At 21–135 the chain is on the cytoplasmic side; the sequence is KFDDFEDEED…PAHLQNSWES (115 aa). The disordered stretch occupies residues 46–118; that stretch reads MEDSVTESPQ…PDTSSSKNKD (73 aa). Acidic residues predominate over residues 60 to 104; the sequence is TEDDEDETTVELEGQDENQEGDFEDADTQEGDTESEPYDDEEFEG. Over residues 105 to 118 the composition is skewed to basic and acidic residues; it reads YEDKPDTSSSKNKD. Residues 136–155 form a helical membrane-spanning segment; the sequence is YYLEILMVTGLLAYIMNYII. At 156–483 the chain is on the lumenal side; that stretch reads GKNKNSRLAQ…KMKQIKVKAM (328 aa). N178 carries an N-linked (GlcNAc...) asparagine glycan. Residues 424-483 form a disordered region; that stretch reads QRQEAAQSRREEKKRAEKERIMNEEDPEKQRRLEEAALRRDQKKLEKKQMKMKQIKVKAM. The span at 430-472 shows a compositional bias: basic and acidic residues; it reads QSRREEKKRAEKERIMNEEDPEKQRRLEEAALRRDQKKLEKKQ. Positions 451 to 481 form a coiled coil; it reads EKQRRLEEAALRRDQKKLEKKQMKMKQIKVK. The span at 473–483 shows a compositional bias: basic residues; the sequence is MKMKQIKVKAM.

Belongs to the CCDC47 family. As to quaternary structure, component of the PAT complex, composed of WDR83OS/Asterix and CCDC47. The PAT complex is part of the multi-pass translocon (MPT) complex, composed of three subcomplexes, the GEL complex (composed of RAB5IF/OPTI and TMCO1), the BOS complex (composed of NCLN/Nicalin, NOMO1 and TMEM147) and the PAT complex (composed of WDR83OS/Asterix and CCDC47). The MPT complex associates with the SEC61 complex. Interacts with VCP, HSPA5, DERL1, DERL2 and SELENOS.

Its subcellular location is the endoplasmic reticulum membrane. It localises to the rough endoplasmic reticulum membrane. In terms of biological role, component of the multi-pass translocon (MPT) complex that mediates insertion of multi-pass membrane proteins into the lipid bilayer of membranes. The MPT complex takes over after the SEC61 complex: following membrane insertion of the first few transmembrane segments of proteins by the SEC61 complex, the MPT complex occludes the lateral gate of the SEC61 complex to promote insertion of subsequent transmembrane regions. Within the MPT complex, the PAT subcomplex sequesters any highly polar regions in the transmembrane domains away from the non-polar membrane environment until they can be buried in the interior of the fully assembled protein. Within the PAT subcomplex, CCDC47 occludes the lateral gate of the SEC61 complex. Involved in the regulation of calcium ion homeostasis in the ER. Required for proper protein degradation via the ERAD (ER-associated degradation) pathway. Has an essential role in the maintenance of ER organization during embryogenesis. This chain is PAT complex subunit CCDC47 (CCDC47), found in Pongo abelii (Sumatran orangutan).